The chain runs to 346 residues: N-acetyl-gamma-glutamyl-phosphate reductase (346 aa).

Cysteine 151 is a catalytic residue.

Belongs to the NAGSA dehydrogenase family. Type 1 subfamily.

The protein localises to the cytoplasm. The enzyme catalyses N-acetyl-L-glutamate 5-semialdehyde + phosphate + NADP(+) = N-acetyl-L-glutamyl 5-phosphate + NADPH + H(+). It functions in the pathway amino-acid biosynthesis; L-arginine biosynthesis; N(2)-acetyl-L-ornithine from L-glutamate: step 3/4. Catalyzes the NADPH-dependent reduction of N-acetyl-5-glutamyl phosphate to yield N-acetyl-L-glutamate 5-semialdehyde. This Ehrlichia canis (strain Jake) protein is N-acetyl-gamma-glutamyl-phosphate reductase.